A 79-amino-acid chain; its full sequence is Large ribosomal subunit protein uL30 (79 aa).

It belongs to the universal ribosomal protein uL30 family. As to quaternary structure, part of the 50S ribosomal subunit.

In Anaeromyxobacter sp. (strain Fw109-5), this protein is Large ribosomal subunit protein uL30.